The following is a 147-amino-acid chain: Large ribosomal subunit protein uL16 (147 aa).

The protein belongs to the universal ribosomal protein uL16 family. In terms of assembly, part of the 50S ribosomal subunit.

Its function is as follows. Binds 23S rRNA and is also seen to make contacts with the A and possibly P site tRNAs. The chain is Large ribosomal subunit protein uL16 from Lactobacillus delbrueckii subsp. bulgaricus (strain ATCC 11842 / DSM 20081 / BCRC 10696 / JCM 1002 / NBRC 13953 / NCIMB 11778 / NCTC 12712 / WDCM 00102 / Lb 14).